The sequence spans 182 residues: Fucoxanthin-chlorophyll a-c binding protein D, chloroplastic (182 aa).

Residues 1-4 (AMKM) constitute a chloroplast transit peptide. The next 3 helical transmembrane spans lie at 46–66 (IAMLAIAGHLTQQNARLPGML), 87–107 (IPPGGLAQIFGFIGFLELAVM), and 148–168 (GRAAQMGILALMVHEELNNKP).

The protein belongs to the fucoxanthin chlorophyll protein family. As to quaternary structure, the LHC complex of chromophytic algae is composed of fucoxanthin, chlorophyll A and C bound non-covalently by fucoxanthin chlorophyll proteins (FCPs). The ratio of pigments in this LHC is; fucoxanthin: chlorophyll C: chlorophyll A; (0.6-1): (0.1-0.3): (1).

The protein localises to the plastid. Its subcellular location is the chloroplast thylakoid membrane. In terms of biological role, the light-harvesting complex (LHC) functions as a light receptor, it captures and delivers excitation energy to photosystems with which it is closely associated. Energy is transferred from the carotenoid and chlorophyll C (or B) to chlorophyll A and the photosynthetic reaction centers where it is used to synthesize ATP and reducing power. The sequence is that of Fucoxanthin-chlorophyll a-c binding protein D, chloroplastic (FCPD) from Macrocystis pyrifera (Giant kelp).